Consider the following 444-residue polypeptide: Chitinase-like protein Idgf4 (444 aa).

The N-terminal stretch at 1–22 (MKLLLILLGALLAVLTIKRTSA) is a signal peptide. The GH18 domain maps to 27–444 (NHLICYYDGT…ILRAIKFKFQ (418 aa)). C31 and C58 form a disulfide bridge. A glycan (N-linked (GlcNAc...) asparagine) is linked at N226. C345 and C428 are oxidised to a cystine.

This sequence belongs to the glycosyl hydrolase 18 family. IDGF subfamily. Glycosylated.

The protein resides in the secreted. Functionally, cooperates with insulin-like peptides to stimulate the proliferation, polarization and motility of imaginal disk cells. May act by stabilizing the binding of insulin-like peptides to its receptor through a simultaneous interaction with both molecules to form a multiprotein signaling complex. In Glossina morsitans morsitans (Savannah tsetse fly), this protein is Chitinase-like protein Idgf4 (Idgf4).